The sequence spans 248 residues: Thioredoxin-like protein AAED1, chloroplastic (248 aa).

A chloroplast-targeting transit peptide spans 1–52 (MAIALSSSSTITSITLQPKLKTIHGLGTVLPGYSVKSHFRSVSLRRSAVVVS). A53 is subject to N-acetylalanine.

The protein belongs to the peroxiredoxin-like PRXL2 family. PRXL2C subfamily.

It localises to the plastid. The protein resides in the chloroplast. The protein is Thioredoxin-like protein AAED1, chloroplastic of Arabidopsis thaliana (Mouse-ear cress).